A 157-amino-acid chain; its full sequence is Isotocin-neurophysin IT 1 (157 aa).

The N-terminal stretch at 1 to 20 (MFGTSVSALCLLFLLSVCTA) is a signal peptide. The cysteines at positions 21 and 26 are disulfide-linked. Glycine amide is present on G29. Intrachain disulfides connect C42–C86, C45–C59, C53–C76, C60–C66, C93–C106, C100–C118, and C107–C112.

Belongs to the vasopressin/oxytocin family. Post-translationally, seven disulfide bonds are present in neurophysin.

It is found in the secreted. In terms of biological role, isotocin causes contraction of smooth muscles. This is Isotocin-neurophysin IT 1 from Oncorhynchus masou (Cherry salmon).